The following is a 117-amino-acid chain: MSTEEQAEWFEFNQETVEALIEDGSDSTKPHTIEYHFAGDDFDVLEKAAVDAFKAGFEVGDAEELMLDDGGTIFCFDAVVERLLDVDLINADTVKLLAIAQKQNVQFDGWGTYFIES.

This sequence belongs to the RraB family. Interacts with the C-terminal region of Rne.

The protein resides in the cytoplasm. Its function is as follows. Globally modulates RNA abundance by binding to RNase E (Rne) and regulating its endonucleolytic activity. Can modulate Rne action in a substrate-dependent manner by altering the composition of the degradosome. In Pseudoalteromonas atlantica (strain T6c / ATCC BAA-1087), this protein is Regulator of ribonuclease activity B.